The sequence spans 109 residues: MSLLEITDAEFEQETQGQTKPVLVYFWASWCGPCRLMAPAIQAIAKDYGDKLKVLKLEVDPNPAAVAQCKVEGVPALRLFKNNELVMTHEGAIAKPKLLELLKEELDFI.

The 106-residue stretch at 2–107 folds into the Thioredoxin domain; the sequence is SLLEITDAEF…LLELLKEELD (106 aa). Cys-31 and Cys-34 are disulfide-bonded.

The protein belongs to the thioredoxin family.

This Synechocystis sp. (strain ATCC 27184 / PCC 6803 / Kazusa) protein is Thioredoxin-like protein slr1139.